The primary structure comprises 892 residues: Formin-like protein 8 (892 aa).

An N-terminal signal peptide occupies residues Met-1–Ala-23. A disordered region spans residues Phe-43–Gly-119. Residues Trp-47–Pro-59 are compositionally biased toward pro residues. Over residues Thr-87–Gly-111 the composition is skewed to low complexity. Residues Ile-126 to Phe-146 form a helical membrane-spanning segment. A disordered region spans residues Pro-188–Lys-457. A compositionally biased stretch (basic and acidic residues) spans Leu-210 to Pro-230. 3 stretches are compositionally biased toward low complexity: residues Ala-268 to Ser-286, Phe-297 to Ala-306, and Arg-321 to Pro-330. Residues Ser-339–Val-383 show a composition bias toward pro residues. Over residues Ala-424–Met-436 the composition is skewed to polar residues. Positions Asp-446–Ala-867 constitute an FH2 domain.

This sequence belongs to the formin-like family. Class-I subfamily.

The protein resides in the membrane. The polypeptide is Formin-like protein 8 (FH8) (Oryza sativa subsp. japonica (Rice)).